The following is a 353-amino-acid chain: Holliday junction branch migration complex subunit RuvB (353 aa).

The segment at 1-25 (MDPGPAGDEVSLAPQQETAEQDVET) is disordered. The large ATPase domain (RuvB-L) stretch occupies residues 1–188 (MDPGPAGDEV…FGFTAHMEFY (188 aa)). Residues L27, R28, G69, K72, T73, S74, 135–137 (EDY), R178, Y188, and R225 contribute to the ATP site. T73 serves as a coordination point for Mg(2+). Residues 189 to 259 (EPAELELVVR…VARAALEVYD (71 aa)) are small ATPAse domain (RuvB-S). The head domain (RuvB-H) stretch occupies residues 262–353 (EHGLDRLDRA…ATRSLFADEV (92 aa)). The DNA site is built by R317 and R322.

The protein belongs to the RuvB family. As to quaternary structure, homohexamer. Forms an RuvA(8)-RuvB(12)-Holliday junction (HJ) complex. HJ DNA is sandwiched between 2 RuvA tetramers; dsDNA enters through RuvA and exits via RuvB. An RuvB hexamer assembles on each DNA strand where it exits the tetramer. Each RuvB hexamer is contacted by two RuvA subunits (via domain III) on 2 adjacent RuvB subunits; this complex drives branch migration. In the full resolvosome a probable DNA-RuvA(4)-RuvB(12)-RuvC(2) complex forms which resolves the HJ.

Its subcellular location is the cytoplasm. The catalysed reaction is ATP + H2O = ADP + phosphate + H(+). In terms of biological role, the RuvA-RuvB-RuvC complex processes Holliday junction (HJ) DNA during genetic recombination and DNA repair, while the RuvA-RuvB complex plays an important role in the rescue of blocked DNA replication forks via replication fork reversal (RFR). RuvA specifically binds to HJ cruciform DNA, conferring on it an open structure. The RuvB hexamer acts as an ATP-dependent pump, pulling dsDNA into and through the RuvAB complex. RuvB forms 2 homohexamers on either side of HJ DNA bound by 1 or 2 RuvA tetramers; 4 subunits per hexamer contact DNA at a time. Coordinated motions by a converter formed by DNA-disengaged RuvB subunits stimulates ATP hydrolysis and nucleotide exchange. Immobilization of the converter enables RuvB to convert the ATP-contained energy into a lever motion, pulling 2 nucleotides of DNA out of the RuvA tetramer per ATP hydrolyzed, thus driving DNA branch migration. The RuvB motors rotate together with the DNA substrate, which together with the progressing nucleotide cycle form the mechanistic basis for DNA recombination by continuous HJ branch migration. Branch migration allows RuvC to scan DNA until it finds its consensus sequence, where it cleaves and resolves cruciform DNA. The protein is Holliday junction branch migration complex subunit RuvB of Saccharopolyspora erythraea (strain ATCC 11635 / DSM 40517 / JCM 4748 / NBRC 13426 / NCIMB 8594 / NRRL 2338).